Consider the following 25-residue polypeptide: GLFSVLGSVAKHLLPHVAPIIAEKL.

L25 carries the post-translational modification Leucine amide.

Belongs to the frog skin active peptide (FSAP) family. Caerin subfamily. As to expression, expressed by the skin dorsal glands.

Its subcellular location is the secreted. Its function is as follows. Caerin-1.17 shows significant activity against Gram-positive organisms, but is less effective against Gram-negative organisms. The chain is Caerin-1.17 from Ranoidea gracilenta (Dainty green tree frog).